The following is a 64-amino-acid chain: Large ribosomal subunit protein bL35 (64 aa).

Belongs to the bacterial ribosomal protein bL35 family.

The polypeptide is Large ribosomal subunit protein bL35 (Micrococcus luteus (strain ATCC 4698 / DSM 20030 / JCM 1464 / CCM 169 / CCUG 5858 / IAM 1056 / NBRC 3333 / NCIMB 9278 / NCTC 2665 / VKM Ac-2230) (Micrococcus lysodeikticus)).